The following is a 512-amino-acid chain: Histidine ammonia-lyase (512 aa).

Positions 142–144 form a cross-link, 5-imidazolinone (Ala-Gly); sequence ASG. 2,3-didehydroalanine (Ser) is present on Ser143.

It belongs to the PAL/histidase family. Post-translationally, contains an active site 4-methylidene-imidazol-5-one (MIO), which is formed autocatalytically by cyclization and dehydration of residues Ala-Ser-Gly.

The protein resides in the cytoplasm. It catalyses the reaction L-histidine = trans-urocanate + NH4(+). The protein operates within amino-acid degradation; L-histidine degradation into L-glutamate; N-formimidoyl-L-glutamate from L-histidine: step 1/3. This chain is Histidine ammonia-lyase, found in Bartonella henselae (strain ATCC 49882 / DSM 28221 / CCUG 30454 / Houston 1) (Rochalimaea henselae).